Consider the following 823-residue polypeptide: Leucine--tRNA ligase (823 aa).

A 'HIGH' region motif is present at residues proline 41–histidine 51. Residues lysine 580 to serine 584 carry the 'KMSKS' region motif. Lysine 583 serves as a coordination point for ATP.

This sequence belongs to the class-I aminoacyl-tRNA synthetase family.

The protein localises to the cytoplasm. The catalysed reaction is tRNA(Leu) + L-leucine + ATP = L-leucyl-tRNA(Leu) + AMP + diphosphate. This Thermosipho melanesiensis (strain DSM 12029 / CIP 104789 / BI429) protein is Leucine--tRNA ligase.